The sequence spans 155 residues: MWSLGGLRLAAGHCLRLYERNASSSLRFTRNTDLKRINGFCTKPQESPKTPTQSYRHGVPLHKPTDFEKKILLWSGRFKKEEEIPETISFEMLDAAKNKLRVKVSYLMIALTVAGCIYMVIEGKKAAKRHESLTSLNLERKARLREEAAMKAKTD.

The required for proapoptotic activity stretch occupies residues 77 to 103; sequence RFKKEEEIPETISFEMLDAAKNKLRVK. The chain crosses the membrane as a helical span at residues 104 to 121; the sequence is VSYLMIALTVAGCIYMVI.

This sequence belongs to the UPF0389 family. Interacts with HSP90AB1; HSP90AB1 is essential for FAM162A mitochondrial localization and pro-apoptotic activity. Interacts with VDAC2; the interaction is probably involved in inducing mitochondrial permeability transition.

The protein localises to the mitochondrion membrane. Proposed to be involved in regulation of apoptosis; the exact mechanism may differ between cell types/tissues. May be involved in hypoxia-induced cell death of transformed cells implicating cytochrome C release and caspase activation (such as CASP9) and inducing mitochondrial permeability transition. May be involved in hypoxia-induced cell death of neuronal cells probably by promoting release of AIFM1 from mitochondria to cytoplasm and its translocation to the nucleus; however, the involvement of caspases has been reported conflictingly. This is Protein FAM162A (Fam162a) from Mus musculus (Mouse).